The primary structure comprises 370 residues: 4-hydroxy-3-methylbut-2-en-1-yl diphosphate synthase (flavodoxin) (370 aa).

Residues cysteine 270, cysteine 273, cysteine 305, and glutamate 312 each coordinate [4Fe-4S] cluster.

It belongs to the IspG family. Requires [4Fe-4S] cluster as cofactor.

The enzyme catalyses (2E)-4-hydroxy-3-methylbut-2-enyl diphosphate + oxidized [flavodoxin] + H2O + 2 H(+) = 2-C-methyl-D-erythritol 2,4-cyclic diphosphate + reduced [flavodoxin]. It functions in the pathway isoprenoid biosynthesis; isopentenyl diphosphate biosynthesis via DXP pathway; isopentenyl diphosphate from 1-deoxy-D-xylulose 5-phosphate: step 5/6. Functionally, converts 2C-methyl-D-erythritol 2,4-cyclodiphosphate (ME-2,4cPP) into 1-hydroxy-2-methyl-2-(E)-butenyl 4-diphosphate. This Hahella chejuensis (strain KCTC 2396) protein is 4-hydroxy-3-methylbut-2-en-1-yl diphosphate synthase (flavodoxin).